We begin with the raw amino-acid sequence, 55 residues long: UPF0434 protein BARBAKC583_1098 (55 aa).

It belongs to the UPF0434 family.

The sequence is that of UPF0434 protein BARBAKC583_1098 from Bartonella bacilliformis (strain ATCC 35685 / KC583 / Herrer 020/F12,63).